Here is a 123-residue protein sequence, read N- to C-terminus: Small ribosomal subunit protein uS12 (123 aa).

The segment at 1-28 (MPTIQQLIRNPREPKRTRTKTPALKACP) is disordered. A 3-methylthioaspartic acid modification is found at Asp-89. Residues 104-123 (TQPVKNRKQRRSHYGAKKPK) are disordered. The segment covering 108-123 (KNRKQRRSHYGAKKPK) has biased composition (basic residues).

The protein belongs to the universal ribosomal protein uS12 family. As to quaternary structure, part of the 30S ribosomal subunit. Contacts proteins S8 and S17. May interact with IF1 in the 30S initiation complex.

Functionally, with S4 and S5 plays an important role in translational accuracy. Interacts with and stabilizes bases of the 16S rRNA that are involved in tRNA selection in the A site and with the mRNA backbone. Located at the interface of the 30S and 50S subunits, it traverses the body of the 30S subunit contacting proteins on the other side and probably holding the rRNA structure together. The combined cluster of proteins S8, S12 and S17 appears to hold together the shoulder and platform of the 30S subunit. The polypeptide is Small ribosomal subunit protein uS12 (Hyphomonas neptunium (strain ATCC 15444)).